A 513-amino-acid polypeptide reads, in one-letter code: MAIRSKAWISLLLALAVALSARAEEEPAAAAEGEAVLTLDVDSFDEAVAKHPFMVVEFYAPWCGHCKKLAPEYENAAKALSKHDPPIVLAKVDANEEKNRPLATKYEIQGFPTIKIFRDRGKNIQEYKGPREADGIVDYLKKQVGPASKEIKSPEDATALIDDKKIYIVGIFAEFSGTEFTNFMEVAEKLRSDYDFGHTLHANHLPRGDAAVERPLVRLLKPFDELVVDSKDFDVAALMKFIDASTIPRVVTFDKNPDNHPYLMKFFQSSAPKAMLFLNFSTGPFDSFKSAYSAAAEEFKDKEIKFLIGDIEASQGAFQYFGLKEDQTPLILIQDGDSKKFLKVHVEADQIVAWLKEYFDGKLTPFRNSEPIPEVNNEPVKVVVADNVHDFVFKSGKNVLIEFYAPWCGHCKKLAPILDEAATTLQSDEEVVIAKMDATANDVPSEFDVQGYPTLYFVTPSGKVTSYDSGRTADDIVDFIKKSKETAAPHHHHHPGATGIREGSRAEPVKDEL.

Positions 1–23 (MAIRSKAWISLLLALAVALSARA) are cleaved as a signal peptide. Positions 24–145 (EEEPAAAAEG…IVDYLKKQVG (122 aa)) constitute a Thioredoxin 1 domain. Residues Cys63 and Cys66 each act as nucleophile in the active site. Cysteines 63 and 66 form a disulfide. Asn279 carries N-linked (GlcNAc...) asparagine glycosylation. The Thioredoxin 2 domain maps to 366–485 (FRNSEPIPEV…IVDFIKKSKE (120 aa)). Catalysis depends on nucleophile residues Cys408 and Cys411. An intrachain disulfide couples Cys408 to Cys411. The disordered stretch occupies residues 485–513 (ETAAPHHHHHPGATGIREGSRAEPVKDEL). A compositionally biased stretch (basic and acidic residues) spans 502-513 (EGSRAEPVKDEL). Positions 510–513 (KDEL) match the Prevents secretion from ER motif.

This sequence belongs to the protein disulfide isomerase family.

It is found in the endoplasmic reticulum lumen. The catalysed reaction is Catalyzes the rearrangement of -S-S- bonds in proteins.. Functionally, participates in the folding of proteins containing disulfide bonds, may be involved in glycosylation, prolyl hydroxylation and triglyceride transfer. In Zea mays (Maize), this protein is Protein disulfide-isomerase (PDI).